The following is a 437-amino-acid chain: ATP-dependent RNA helicase SUB2 (437 aa).

A compositionally biased stretch (acidic residues) spans 1–19 (MSHEAEEDLLEYSDNEQEV). Residues 1–45 (MSHEAEEDLLEYSDNEQEVQVDNKATEVNAEGNGESQAKDSDKKG) are disordered. A Q motif motif is present at residues 53–81 (TGFKDFLLKPELSRAIIDCGFEHPSEVQQ). Residues 84–259 (IPQSIHGTDV…RRFLQNPLEI (176 aa)) enclose the Helicase ATP-binding domain. Residue 97 to 104 (AKSGLGKT) participates in ATP binding. The DECD box motif lies at 206–209 (DECD). The Helicase C-terminal domain occupies 287-432 (KLAQLLDDLE…EFPEEGVDPS (146 aa)).

Belongs to the DEAD box helicase family. DECD subfamily.

The protein localises to the nucleus. The enzyme catalyses ATP + H2O = ADP + phosphate + H(+). Its function is as follows. ATP-binding RNA helicase involved in transcription elongation and required for the export of mRNA out of the nucleus. SUB2 also plays a role in pre-mRNA splicing and spliceosome assembly. May be involved in rDNA and telomeric silencing, and maintenance of genome integrity. This is ATP-dependent RNA helicase SUB2 (SUB2) from Kluyveromyces lactis (strain ATCC 8585 / CBS 2359 / DSM 70799 / NBRC 1267 / NRRL Y-1140 / WM37) (Yeast).